The chain runs to 69 residues: Protein SlyX homolog (69 aa).

This sequence belongs to the SlyX family.

This Maricaulis maris (strain MCS10) (Caulobacter maris) protein is Protein SlyX homolog.